Consider the following 365-residue polypeptide: Patr class I histocompatibility antigen, A-108 alpha chain (365 aa).

A signal peptide spans 1–24 (MAVMPPRTLLLLLSGALALTQTWA). The interval 25 to 114 (GSHSMRYFYT…LRGYYNQSED (90 aa)) is alpha-1. Topologically, residues 25-308 (GSHSMRYFYT…EPSSQPTIPI (284 aa)) are extracellular. The N-linked (GlcNAc...) asparagine glycan is linked to N110. The interval 115–206 (GSHTIQIMYG…ENGKETLQRT (92 aa)) is alpha-2. 2 disulfides stabilise this stretch: C125-C188 and C227-C283. An alpha-3 region spans residues 207–298 (DPPKTHMTHH…GLPKPLTLRW (92 aa)). Residues 209 to 295 (PKTHMTHHPI…QHEGLPKPLT (87 aa)) form the Ig-like C1-type domain. The tract at residues 299-308 (EPSSQPTIPI) is connecting peptide. A helical membrane pass occupies residues 309-332 (VGIIAGLVLLGAVITGAVVAAVMW). At 333–365 (RRKSSDRKGGSYTQAASSDSAQGSDVSLTACKV) the chain is on the cytoplasmic side. Residues 339–360 (RKGGSYTQAASSDSAQGSDVSL) form a disordered region. S343 carries the post-translational modification Phosphoserine. At Y344 the chain carries Phosphotyrosine. The segment covering 346 to 359 (QAASSDSAQGSDVS) has biased composition (low complexity). Phosphoserine is present on residues S349, S350, S352, S356, and S359.

It belongs to the MHC class I family. Heterodimer of an alpha chain and a beta chain (beta-2-microglobulin).

The protein resides in the membrane. In terms of biological role, involved in the presentation of foreign antigens to the immune system. This Pan troglodytes (Chimpanzee) protein is Patr class I histocompatibility antigen, A-108 alpha chain (Patr-A).